The sequence spans 291 residues: Phosphatidylglycerol--prolipoprotein diacylglyceryl transferase (291 aa).

7 helical membrane-spanning segments follow: residues 21 to 41 (VALHWYGLMYLVGFVFAMWLA), 60 to 80 (LLYAGFLGVFLGGRIGYVLFY), 96 to 116 (WDGGMSFHGGLIGVILVMIIF), 130 to 150 (FIAPLIPFGLGAGRLGNFING), 198 to 218 (SQLYELALEGVVLFIILNLFI), 225 to 245 (GAVSGLFLIGYGAFRIIVEFF), and 260 to 280 (ISMGQILSIPMIIAGAIMMVW). A 1,2-diacyl-sn-glycero-3-phospho-(1'-sn-glycerol) is bound at residue Arg-143.

This sequence belongs to the Lgt family.

The protein localises to the cell inner membrane. It carries out the reaction L-cysteinyl-[prolipoprotein] + a 1,2-diacyl-sn-glycero-3-phospho-(1'-sn-glycerol) = an S-1,2-diacyl-sn-glyceryl-L-cysteinyl-[prolipoprotein] + sn-glycerol 1-phosphate + H(+). It participates in protein modification; lipoprotein biosynthesis (diacylglyceryl transfer). Its function is as follows. Catalyzes the transfer of the diacylglyceryl group from phosphatidylglycerol to the sulfhydryl group of the N-terminal cysteine of a prolipoprotein, the first step in the formation of mature lipoproteins. The sequence is that of Phosphatidylglycerol--prolipoprotein diacylglyceryl transferase from Salmonella agona (strain SL483).